The sequence spans 406 residues: Tyrosine--tRNA ligase (406 aa).

Tyrosine 35 provides a ligand contact to L-tyrosine. Positions 40–49 match the 'HIGH' region motif; that stretch reads PTADSLHVGH. Tyrosine 168 and glutamine 172 together coordinate L-tyrosine. A 'KMSKS' region motif is present at residues 228-232; sequence KMGKT. An ATP-binding site is contributed by lysine 231. Residues 340–404 form the S4 RNA-binding domain; sequence SELLDILVEA…RGKKNYNKIV (65 aa).

Belongs to the class-I aminoacyl-tRNA synthetase family. TyrS type 1 subfamily. In terms of assembly, homodimer.

The protein localises to the cytoplasm. It carries out the reaction tRNA(Tyr) + L-tyrosine + ATP = L-tyrosyl-tRNA(Tyr) + AMP + diphosphate + H(+). Catalyzes the attachment of tyrosine to tRNA(Tyr) in a two-step reaction: tyrosine is first activated by ATP to form Tyr-AMP and then transferred to the acceptor end of tRNA(Tyr). The sequence is that of Tyrosine--tRNA ligase from Clostridium perfringens (strain SM101 / Type A).